A 126-amino-acid chain; its full sequence is Glycine cleavage system H protein (126 aa).

The Lipoyl-binding domain maps to 23–104 (TLTVGITDHA…PYDNWLFKIK (82 aa)). The residue at position 64 (K64) is an N6-lipoyllysine.

Belongs to the GcvH family. In terms of assembly, the glycine cleavage system is composed of four proteins: P, T, L and H. It depends on (R)-lipoate as a cofactor.

The glycine cleavage system catalyzes the degradation of glycine. The H protein shuttles the methylamine group of glycine from the P protein to the T protein. The protein is Glycine cleavage system H protein of Paraburkholderia phymatum (strain DSM 17167 / CIP 108236 / LMG 21445 / STM815) (Burkholderia phymatum).